The primary structure comprises 822 residues: MWSWKCLLFWAVLVTATLCTARPSPTLPEQAQPWGAPVEVESFLVHPGDLLQLRCRLRDDVQSINWLRDGVQLAESNRTRITGEEVEVQDSVPADSGLYACVTSSPSGSDTTYFSVNVSDALPSSEDDDDDDDSSSEEKETDNTKPNRMPVAPYWTSPEKMEKKLHAVPAAKTVKFKCPSSGTPNPTLRWLKNGKEFKPDHRIGGYKVRYATWSIIMDSVVPSDKGNYTCIVENEYGSINHTYQLDVVERSPHRPILQAGLPANKTVALGSNVEFMCKVYSDPQPHIQWLKHIEVNGSKIGPDNLPYVQILKTAGVNTTDKEMEVLHLRNVSFEDAGEYTCLAGNSIGLSHHSAWLTVLEALEERPAVMTSPLYLEIIIYCTGAFLISCMVGSVIVYKMKSGTKKSDFHSQMAVHKLAKSIPLRRQVTVSADSSASMNSGVLLVRPSRLSSSGTPMLAGVSEYELPEDPRWELPRDRLVLGKPLGEGCFGQVVLAEAIGLDKDKPNRVTKVAVKMLKSDATEKDLSDLISEMEMMKMIGKHKNIINLLGACTQDGPLYVIVEYASKGNLREYLQARRPPGLEYCYNPSHNPEEQLSSKDLVSCAYQVARGMEYLASKKCIHRDLAARNVLVTEDNVMKIADFGLARDIHHIDYYKKTTNGRLPVKWMAPEALFDRIYTHQSDVWSFGVLLWEIFTLGGSPYPGVPVEELFKLLKEGHRMDKPSNCTNELYMMMRDCWHAVPSQRPTFKQLVEDLDRIVALTSNQEYLDLSMPLDQYSPSFPDTRSSTCSSGEDSVFSHEPLPEEPCLPRHPAQLANGGLKRR.

The signal sequence occupies residues 1–21 (MWSWKCLLFWAVLVTATLCTA). Over 22–376 (RPSPTLPEQA…AVMTSPLYLE (355 aa)) the chain is Extracellular. One can recognise an Ig-like C2-type 1 domain in the interval 25–119 (PTLPEQAQPW…DTTYFSVNVS (95 aa)). A disulfide bridge links Cys-55 with Cys-101. N-linked (GlcNAc...) asparagine glycans are attached at residues Asn-77 and Asn-117. Positions 120–154 (DALPSSEDDDDDDDSSSEEKETDNTKPNRMPVAPY) are disordered. The span at 125–135 (SEDDDDDDDSS) shows a compositional bias: acidic residues. The span at 136-145 (SEEKETDNTK) shows a compositional bias: basic and acidic residues. Ig-like C2-type domains follow at residues 158-246 (PEKM…YQLD) and 255-357 (PILQ…AWLT). The heparin-binding stretch occupies residues 160–177 (KMEKKLHAVPAAKTVKFK). Cys-178 and Cys-230 are disulfide-bonded. N-linked (GlcNAc...) asparagine glycosylation is found at Asn-227, Asn-240, Asn-264, Asn-296, Asn-317, and Asn-330. Residues Cys-277 and Cys-341 are joined by a disulfide bond. The chain crosses the membrane as a helical span at residues 377–397 (IIIYCTGAFLISCMVGSVIVY). Topologically, residues 398 to 822 (KMKSGTKKSD…QLANGGLKRR (425 aa)) are cytoplasmic. Tyr-463 is subject to Phosphotyrosine; by autocatalysis. One can recognise a Protein kinase domain in the interval 478-767 (LVLGKPLGEG…VALTSNQEYL (290 aa)). ATP is bound by residues 484–490 (LGEGCFG), Lys-514, 562–564 (EYA), and Asn-568. Phosphotyrosine; by autocatalysis occurs at positions 583 and 585. The active-site Proton acceptor is Asp-623. Residues Arg-627 and Asp-641 each coordinate ATP. Tyr-653, Tyr-654, Tyr-730, and Tyr-766 each carry phosphotyrosine; by autocatalysis. Over residues 778-792 (PSFPDTRSSTCSSGE) the composition is skewed to polar residues. Residues 778–822 (PSFPDTRSSTCSSGEDSVFSHEPLPEEPCLPRHPAQLANGGLKRR) are disordered.

It belongs to the protein kinase superfamily. Tyr protein kinase family. Fibroblast growth factor receptor subfamily. As to quaternary structure, monomer. Homodimer after ligand binding. Interacts predominantly with FGF1 and FGF2, but can also interact with FGF3, FGF4, FGF5, FGF6, FGF8, FGF10, FGF19, FGF21, FGF22 and FGF23 (in vitro). Ligand specificity is determined by tissue-specific expression of isoforms, and differences in the third Ig-like domain are crucial for ligand specificity. Affinity for fibroblast growth factors (FGFs) is increased by heparan sulfate glycosaminoglycans that function as coreceptors. Likewise, KLB increases the affinity for FGF19, FGF21 and FGF23. Interacts (phosphorylated on Tyr-766) with PLCG1 (via SH2 domains). Interacts with FRS2. Interacts with RPS6KA1. Interacts (via C-terminus) with NEDD4 (via WW3 domain). Interacts with KL. Interacts with SHB (via SH2 domain). Interacts with GRB10. Interacts with ANOS1; this interaction does not interfere with FGF2-binding to FGFR1, but prevents binding of heparin-bound FGF2. Interacts with SOX2 and SOX3. Interacts with FLRT1, FLRT2 and FLRT3. Found in a ternary complex with FGF1 and ITGAV:ITGB3. In terms of processing, autophosphorylated. Binding of FGF family members together with heparan sulfate proteoglycan or heparin promotes receptor dimerization and autophosphorylation on tyrosine residues. Autophosphorylation occurs in trans between the two FGFR molecules present in the dimer and proceeds in a highly ordered manner. Initial autophosphorylation at Tyr-653 increases the kinase activity by a factor of 50 to 100. After this, Tyr-583 becomes phosphorylated, followed by phosphorylation of Tyr-463, Tyr-766, Tyr-583 and Tyr-585. In a third stage, Tyr-654 is autophosphorylated, resulting in a further tenfold increase of kinase activity. Phosphotyrosine residues provide docking sites for interacting proteins and so are crucial for FGFR1 function and its regulation. Post-translationally, ubiquitinated. FGFR1 is rapidly ubiquitinated by NEDD4 after autophosphorylation, leading to internalization and lysosomal degradation. CBL is recruited to activated FGFR1 via FRS2 and GRB2, and mediates ubiquitination and subsequent degradation of FGFR1. N-glycosylated in the endoplasmic reticulum. The N-glycan chains undergo further maturation to an Endo H-resistant form in the Golgi apparatus. In terms of tissue distribution, detected in astrocytoma, neuroblastoma and adrenal cortex cell lines. Some isoforms are detected in foreskin fibroblast cell lines, however isoform 17, isoform 18 and isoform 19 are not detected in these cells.

It is found in the cell membrane. The protein localises to the nucleus. It localises to the cytoplasm. Its subcellular location is the cytosol. The protein resides in the cytoplasmic vesicle. It carries out the reaction L-tyrosyl-[protein] + ATP = O-phospho-L-tyrosyl-[protein] + ADP + H(+). Its activity is regulated as follows. Present in an inactive conformation in the absence of bound ligand. Ligand binding leads to dimerization and activation by sequential autophosphorylation on tyrosine residues. Inhibited by ARQ 069; this compound maintains the kinase in an inactive conformation and inhibits autophosphorylation. Inhibited by PD173074. Tyrosine-protein kinase that acts as a cell-surface receptor for fibroblast growth factors and plays an essential role in the regulation of embryonic development, cell proliferation, differentiation and migration. Required for normal mesoderm patterning and correct axial organization during embryonic development, normal skeletogenesis and normal development of the gonadotropin-releasing hormone (GnRH) neuronal system. Phosphorylates PLCG1, FRS2, GAB1 and SHB. Ligand binding leads to the activation of several signaling cascades. Activation of PLCG1 leads to the production of the cellular signaling molecules diacylglycerol and inositol 1,4,5-trisphosphate. Phosphorylation of FRS2 triggers recruitment of GRB2, GAB1, PIK3R1 and SOS1, and mediates activation of RAS, MAPK1/ERK2, MAPK3/ERK1 and the MAP kinase signaling pathway, as well as of the AKT1 signaling pathway. Promotes phosphorylation of SHC1, STAT1 and PTPN11/SHP2. In the nucleus, enhances RPS6KA1 and CREB1 activity and contributes to the regulation of transcription. FGFR1 signaling is down-regulated by IL17RD/SEF, and by FGFR1 ubiquitination, internalization and degradation. The chain is Fibroblast growth factor receptor 1 (FGFR1) from Homo sapiens (Human).